A 497-amino-acid chain; its full sequence is Sorting nexin-4 (497 aa).

Positions 1 to 59 (MDQHDDFDSVSWRQDPESDISRPTTSGTDADESLEYNRDTNGKRRMSSVHEDPPQAGPL) are disordered. The segment covering 35-53 (EYNRDTNGKRRMSSVHEDP) has biased composition (basic and acidic residues). The 123-residue stretch at 72–194 (VLECRVDSPL…IFLESPDWNA (123 aa)) folds into the PX domain. A 1,2-diacyl-sn-glycero-3-phospho-(1D-myo-inositol-3-phosphate)-binding residues include arginine 115, threonine 117, lysine 141, and arginine 160. 2 coiled-coil regions span residues 235-261 (RRFI…VARV) and 397-432 (EQSR…DEEV).

This sequence belongs to the sorting nexin family.

It localises to the cytoplasm. The protein resides in the cytosol. Its subcellular location is the preautophagosomal structure membrane. It is found in the endosome membrane. In terms of biological role, sorting nexin, involved in the separation or division of vacuoles throughout the entire life cycle of the cells. Involved in retrieval of late-Golgi SNAREs from post-Golgi endosomes to the trans-Golgi network, for cytoplasm to vacuole transport (Cvt), and autophagy of large cargos including mitophagy, pexophagy and glycophagy. This is Sorting nexin-4 (snx4) from Aspergillus fumigatus (strain ATCC MYA-4609 / CBS 101355 / FGSC A1100 / Af293) (Neosartorya fumigata).